The following is a 590-amino-acid chain: Aspartate--tRNA(Asp/Asn) ligase (590 aa).

E175 provides a ligand contact to L-aspartate. The interval 199–202 is aspartate; the sequence is QQYK. Residues R221 and H450 each coordinate L-aspartate. 221-223 serves as a coordination point for ATP; sequence RDE. Residue E484 participates in ATP binding. An L-aspartate-binding site is contributed by R491. 536-539 contacts ATP; it reads GVDR.

It belongs to the class-II aminoacyl-tRNA synthetase family. Type 1 subfamily. In terms of assembly, homodimer.

Its subcellular location is the cytoplasm. It carries out the reaction tRNA(Asx) + L-aspartate + ATP = L-aspartyl-tRNA(Asx) + AMP + diphosphate. Functionally, aspartyl-tRNA synthetase with relaxed tRNA specificity since it is able to aspartylate not only its cognate tRNA(Asp) but also tRNA(Asn). Reaction proceeds in two steps: L-aspartate is first activated by ATP to form Asp-AMP and then transferred to the acceptor end of tRNA(Asp/Asn). The sequence is that of Aspartate--tRNA(Asp/Asn) ligase from Rhodopseudomonas palustris (strain BisB18).